The primary structure comprises 504 residues: L-arabinose isomerase (504 aa).

Residues E308, E335, H352, and H452 each contribute to the Mn(2+) site.

The protein belongs to the arabinose isomerase family. Requires Mn(2+) as cofactor.

The catalysed reaction is beta-L-arabinopyranose = L-ribulose. It participates in carbohydrate degradation; L-arabinose degradation via L-ribulose; D-xylulose 5-phosphate from L-arabinose (bacterial route): step 1/3. Functionally, catalyzes the conversion of L-arabinose to L-ribulose. The protein is L-arabinose isomerase of Bifidobacterium adolescentis (strain ATCC 15703 / DSM 20083 / NCTC 11814 / E194a).